We begin with the raw amino-acid sequence, 72 residues long: SPbeta prophage-derived uncharacterized protein YorV (72 aa).

The sequence is that of SPbeta prophage-derived uncharacterized protein YorV (yorV) from Bacillus subtilis (strain 168).